Reading from the N-terminus, the 609-residue chain is UvrABC system protein C (609 aa).

The region spanning 16-94 is the GIY-YIG domain; sequence SSAGVYRMYD…IKQYMPKYNV (79 aa). The region spanning 203–238 is the UVR domain; that stretch reads KQVISELVAKMEEAAGQQAYEQAARFRDQIMALRRV.

This sequence belongs to the UvrC family. Interacts with UvrB in an incision complex.

The protein resides in the cytoplasm. Its function is as follows. The UvrABC repair system catalyzes the recognition and processing of DNA lesions. UvrC both incises the 5' and 3' sides of the lesion. The N-terminal half is responsible for the 3' incision and the C-terminal half is responsible for the 5' incision. This chain is UvrABC system protein C, found in Shewanella sp. (strain ANA-3).